Here is a 953-residue protein sequence, read N- to C-terminus: Catenin alpha-2 (953 aa).

Thr632 is subject to Phosphothreonine. Phosphoserine occurs at positions 640, 651, and 901. Positions 912-927 (EKKPLVKREKPEEFQT) are enriched in basic and acidic residues. The tract at residues 912–939 (EKKPLVKREKPEEFQTRVRRGSQKKHIS) is disordered. Residues 928–938 (RVRRGSQKKHI) show a composition bias toward basic residues. A Phosphoserine modification is found at Ser939.

Belongs to the vinculin/alpha-catenin family. Interacts with CDH1 and CDH2. Interacts with ZNF639; recruits CTNNA2 to the nucleus. Interacts with F-actin. Expressed almost exclusively in the nervous system.

The protein resides in the cell membrane. Its subcellular location is the cytoplasm. It is found in the cytoskeleton. The protein localises to the cell junction. It localises to the adherens junction. The protein resides in the cell projection. Its subcellular location is the axon. It is found in the nucleus. May function as a linker between cadherin adhesion receptors and the cytoskeleton to regulate cell-cell adhesion and differentiation in the nervous system. Required for proper regulation of cortical neuronal migration and neurite growth. It acts as a negative regulator of Arp2/3 complex activity and Arp2/3-mediated actin polymerization. It thereby suppresses excessive actin branching which would impair neurite growth and stability. Regulates morphological plasticity of synapses and cerebellar and hippocampal lamination during development. Functions in the control of startle modulation. This is Catenin alpha-2 (Ctnna2) from Mus musculus (Mouse).